The following is a 61-amino-acid chain: Small ribosomal subunit protein uS14 (61 aa).

Residues cysteine 24, cysteine 27, cysteine 40, and cysteine 43 each contribute to the Zn(2+) site.

Belongs to the universal ribosomal protein uS14 family. Zinc-binding uS14 subfamily. As to quaternary structure, part of the 30S ribosomal subunit. Contacts proteins S3 and S10. The cofactor is Zn(2+).

Functionally, binds 16S rRNA, required for the assembly of 30S particles and may also be responsible for determining the conformation of the 16S rRNA at the A site. The sequence is that of Small ribosomal subunit protein uS14 from Deinococcus deserti (strain DSM 17065 / CIP 109153 / LMG 22923 / VCD115).